Here is a 184-residue protein sequence, read N- to C-terminus: Protein GrpE (184 aa).

The tract at residues 1–26 (MTAPQEPVDSTPESGENAATPGLEDD) is disordered.

It belongs to the GrpE family. As to quaternary structure, homodimer.

The protein localises to the cytoplasm. Its function is as follows. Participates actively in the response to hyperosmotic and heat shock by preventing the aggregation of stress-denatured proteins, in association with DnaK and GrpE. It is the nucleotide exchange factor for DnaK and may function as a thermosensor. Unfolded proteins bind initially to DnaJ; upon interaction with the DnaJ-bound protein, DnaK hydrolyzes its bound ATP, resulting in the formation of a stable complex. GrpE releases ADP from DnaK; ATP binding to DnaK triggers the release of the substrate protein, thus completing the reaction cycle. Several rounds of ATP-dependent interactions between DnaJ, DnaK and GrpE are required for fully efficient folding. The sequence is that of Protein GrpE from Bordetella bronchiseptica (strain ATCC BAA-588 / NCTC 13252 / RB50) (Alcaligenes bronchisepticus).